The primary structure comprises 360 residues: Aurora kinase B (360 aa).

Positions phenylalanine 93–valine 343 constitute a Protein kinase domain. Residues leucine 99 to valine 107 and lysine 122 contribute to the ATP site. Aspartate 216 serves as the catalytic Proton acceptor.

This sequence belongs to the protein kinase superfamily. Ser/Thr protein kinase family. Aurora subfamily. As to quaternary structure, component of the chromosomal passenger complex (CPC).

The protein localises to the nucleus. It is found in the chromosome. It localises to the centromere. Its subcellular location is the cytoplasm. The protein resides in the cytoskeleton. The protein localises to the spindle. It is found in the midbody. The enzyme catalyses L-seryl-[protein] + ATP = O-phospho-L-seryl-[protein] + ADP + H(+). It carries out the reaction L-threonyl-[protein] + ATP = O-phospho-L-threonyl-[protein] + ADP + H(+). With respect to regulation, kinase activity is stimulated by cell-cycle specific phosphorylation. Serine/threonine-protein kinase component of the chromosomal passenger complex (CPC), a complex that acts as a key regulator of mitosis. The CPC complex has essential functions at the centromere in ensuring correct chromosome alignment and segregation and is required for chromatin-induced microtubule stabilization and spindle assembly. Involved in the bipolar attachment of spindle microtubules to kinetochores and is a key regulator for the onset of cytokinesis during mitosis. Required for central/midzone spindle assembly and cleavage furrow formation. Key component of the cytokinesis checkpoint, a process required to delay abscission to prevent both premature resolution of intercellular chromosome bridges and accumulation of DNA damage. Phosphorylates 'Ser-10' of histone H3 during mitosis. This is Aurora kinase B from Xenopus tropicalis (Western clawed frog).